A 456-amino-acid chain; its full sequence is Nuclear distribution protein PAC1 (456 aa).

The LisH domain occupies 9 to 41 (QADELHKSIIAYLSANDLPNTAAALRAELNLTE). Residues 61 to 88 (TSIVRLQKKIMDLEARNAALQSELDNLT) adopt a coiled-coil conformation. WD repeat units lie at residues 114–153 (SHRDTINCIAFHPKFSSLASGSDDFTIKIWDWELGELEMT), 156–197 (GHTR…KNVR), 201–240 (GHDHSVSAVRFIPCRNLLASASRDKDVRIWDVTTGYCVRS), 243–282 (GHTGWVRDVCPSFDGNFLFSSGDDMTARLWDISAIPNPEN), 288–348 (GHEH…LMTL), 350–389 (GHDNWVRGIVFHPAGKYLLSVSDDRTLRCWDLSQEGKCVK), 394–437 (AHDR…PDVQ), and 439–456 (RCVIATGSVDRKLQIFAA).

This sequence belongs to the WD repeat LIS1/nudF family. Self-associates. Interacts with NDL1 and dynein.

The protein resides in the cytoplasm. It localises to the cytoskeleton. The protein localises to the spindle pole. Functionally, positively regulates the activity of the minus-end directed microtubule motor protein dynein. May enhance dynein-mediated microtubule sliding by targeting dynein to the microtubule plus end. Required for nuclear migration during vegetative growth as well as development. Required for retrograde early endosome (EE) transport from the hyphal tip. Required for localization of dynein to the mitotic spindle poles. Recruits additional proteins to the dynein complex at SPBs. The chain is Nuclear distribution protein PAC1 from Ajellomyces capsulatus (strain H143) (Darling's disease fungus).